A 277-amino-acid polypeptide reads, in one-letter code: Thymidylate synthase (277 aa).

A dUMP-binding site is contributed by arginine 21. Histidine 51 is a (6R)-5,10-methylene-5,6,7,8-tetrahydrofolate binding site. 126–127 (RR) is a dUMP binding site. Cysteine 159 serves as the catalytic Nucleophile. DUMP-binding positions include 179–182 (RSAD), asparagine 190, and 220–222 (HLY). Residue aspartate 182 participates in (6R)-5,10-methylene-5,6,7,8-tetrahydrofolate binding. Serine 276 serves as a coordination point for (6R)-5,10-methylene-5,6,7,8-tetrahydrofolate.

It belongs to the thymidylate synthase family. Bacterial-type ThyA subfamily. In terms of assembly, homodimer.

It localises to the cytoplasm. The enzyme catalyses dUMP + (6R)-5,10-methylene-5,6,7,8-tetrahydrofolate = 7,8-dihydrofolate + dTMP. Its pathway is pyrimidine metabolism; dTTP biosynthesis. In terms of biological role, catalyzes the reductive methylation of 2'-deoxyuridine-5'-monophosphate (dUMP) to 2'-deoxythymidine-5'-monophosphate (dTMP) while utilizing 5,10-methylenetetrahydrofolate (mTHF) as the methyl donor and reductant in the reaction, yielding dihydrofolate (DHF) as a by-product. This enzymatic reaction provides an intracellular de novo source of dTMP, an essential precursor for DNA biosynthesis. The sequence is that of Thymidylate synthase from Hydrogenovibrio crunogenus (strain DSM 25203 / XCL-2) (Thiomicrospira crunogena).